The chain runs to 485 residues: UDP-N-acetylmuramoyl-L-alanyl-D-glutamate--2,6-diaminopimelate ligase (485 aa).

Position 30 (Ser30) interacts with UDP-N-acetyl-alpha-D-muramoyl-L-alanyl-D-glutamate. Residue 113–119 coordinates ATP; it reads GTNGKTT. UDP-N-acetyl-alpha-D-muramoyl-L-alanyl-D-glutamate is bound by residues 155-156, Ser182, and Arg190; that span reads TT. Lys222 bears the N6-carboxylysine mark. Meso-2,6-diaminopimelate is bound by residues Arg381, 405 to 408, Gly455, and Glu459; that span reads DNPR. A Meso-diaminopimelate recognition motif motif is present at residues 405–408; sequence DNPR.

Belongs to the MurCDEF family. MurE subfamily. Mg(2+) is required as a cofactor. Carboxylation is probably crucial for Mg(2+) binding and, consequently, for the gamma-phosphate positioning of ATP.

It is found in the cytoplasm. The enzyme catalyses UDP-N-acetyl-alpha-D-muramoyl-L-alanyl-D-glutamate + meso-2,6-diaminopimelate + ATP = UDP-N-acetyl-alpha-D-muramoyl-L-alanyl-gamma-D-glutamyl-meso-2,6-diaminopimelate + ADP + phosphate + H(+). The protein operates within cell wall biogenesis; peptidoglycan biosynthesis. In terms of biological role, catalyzes the addition of meso-diaminopimelic acid to the nucleotide precursor UDP-N-acetylmuramoyl-L-alanyl-D-glutamate (UMAG) in the biosynthesis of bacterial cell-wall peptidoglycan. This Clostridium tetani (strain Massachusetts / E88) protein is UDP-N-acetylmuramoyl-L-alanyl-D-glutamate--2,6-diaminopimelate ligase.